A 709-amino-acid chain; its full sequence is Ribosomal RNA large subunit methyltransferase K/L (709 aa).

One can recognise a THUMP domain in the interval 43–154 (LAYRITLWTR…NGVITIAMNF (112 aa)).

The protein belongs to the methyltransferase superfamily. RlmKL family.

It is found in the cytoplasm. The catalysed reaction is guanosine(2445) in 23S rRNA + S-adenosyl-L-methionine = N(2)-methylguanosine(2445) in 23S rRNA + S-adenosyl-L-homocysteine + H(+). It carries out the reaction guanosine(2069) in 23S rRNA + S-adenosyl-L-methionine = N(2)-methylguanosine(2069) in 23S rRNA + S-adenosyl-L-homocysteine + H(+). In terms of biological role, specifically methylates the guanine in position 2445 (m2G2445) and the guanine in position 2069 (m7G2069) of 23S rRNA. The protein is Ribosomal RNA large subunit methyltransferase K/L of Shewanella baltica (strain OS185).